We begin with the raw amino-acid sequence, 149 residues long: Large ribosomal subunit protein uL15 (149 aa).

The disordered stretch occupies residues methionine 1–leucine 57. A compositionally biased stretch (gly residues) spans isoleucine 23–methionine 35.

Belongs to the universal ribosomal protein uL15 family. As to quaternary structure, part of the 50S ribosomal subunit.

In terms of biological role, binds to the 23S rRNA. The protein is Large ribosomal subunit protein uL15 of Acaryochloris marina (strain MBIC 11017).